We begin with the raw amino-acid sequence, 252 residues long: 2-succinyl-6-hydroxy-2,4-cyclohexadiene-1-carboxylate synthase (252 aa).

This sequence belongs to the AB hydrolase superfamily. MenH family. Monomer.

The catalysed reaction is 5-enolpyruvoyl-6-hydroxy-2-succinyl-cyclohex-3-ene-1-carboxylate = (1R,6R)-6-hydroxy-2-succinyl-cyclohexa-2,4-diene-1-carboxylate + pyruvate. It participates in quinol/quinone metabolism; 1,4-dihydroxy-2-naphthoate biosynthesis; 1,4-dihydroxy-2-naphthoate from chorismate: step 3/7. It functions in the pathway quinol/quinone metabolism; menaquinone biosynthesis. Functionally, catalyzes a proton abstraction reaction that results in 2,5-elimination of pyruvate from 2-succinyl-5-enolpyruvyl-6-hydroxy-3-cyclohexene-1-carboxylate (SEPHCHC) and the formation of 2-succinyl-6-hydroxy-2,4-cyclohexadiene-1-carboxylate (SHCHC). This Shigella dysenteriae serotype 1 (strain Sd197) protein is 2-succinyl-6-hydroxy-2,4-cyclohexadiene-1-carboxylate synthase.